Consider the following 510-residue polypeptide: NAD(P)H-quinone oxidoreductase subunit 2 A, chloroplastic (510 aa).

A run of 13 helical transmembrane segments spans residues 24–44 (LLLF…GLIL), 57–77 (MPWL…ALLF), 99–119 (IFQF…VEYI), 124–144 (MAIT…MFLC), 149–169 (LITI…LSGY), 183–203 (YLLM…WLYG), 227–247 (PGIS…LSPA), 295–315 (WHLL…LIAI), 323–343 (MLAY…IVGD), 354–374 (YMLF…LFGL), 395–415 (ALSL…AGFF), 418–438 (LHLF…IGLL), and 482–502 (LSMI…SPII).

This sequence belongs to the complex I subunit 2 family. As to quaternary structure, NDH is composed of at least 16 different subunits, 5 of which are encoded in the nucleus.

It localises to the plastid. Its subcellular location is the chloroplast thylakoid membrane. The catalysed reaction is a plastoquinone + NADH + (n+1) H(+)(in) = a plastoquinol + NAD(+) + n H(+)(out). It catalyses the reaction a plastoquinone + NADPH + (n+1) H(+)(in) = a plastoquinol + NADP(+) + n H(+)(out). In terms of biological role, NDH shuttles electrons from NAD(P)H:plastoquinone, via FMN and iron-sulfur (Fe-S) centers, to quinones in the photosynthetic chain and possibly in a chloroplast respiratory chain. The immediate electron acceptor for the enzyme in this species is believed to be plastoquinone. Couples the redox reaction to proton translocation, and thus conserves the redox energy in a proton gradient. This Populus trichocarpa (Western balsam poplar) protein is NAD(P)H-quinone oxidoreductase subunit 2 A, chloroplastic.